A 403-amino-acid polypeptide reads, in one-letter code: Imidazolonepropionase (403 aa).

The Fe(3+) site is built by His-68 and His-70. 2 residues coordinate Zn(2+): His-68 and His-70. 3 residues coordinate 4-imidazolone-5-propanoate: Arg-77, Tyr-140, and His-173. Tyr-140 is a binding site for N-formimidoyl-L-glutamate. Residue His-238 coordinates Fe(3+). Residue His-238 participates in Zn(2+) binding. Gln-241 is a 4-imidazolone-5-propanoate binding site. Asp-313 lines the Fe(3+) pocket. Asp-313 lines the Zn(2+) pocket. Positions 315 and 317 each coordinate N-formimidoyl-L-glutamate. 4-imidazolone-5-propanoate is bound at residue Ser-318.

It belongs to the metallo-dependent hydrolases superfamily. HutI family. Zn(2+) is required as a cofactor. Fe(3+) serves as cofactor.

Its subcellular location is the cytoplasm. It carries out the reaction 4-imidazolone-5-propanoate + H2O = N-formimidoyl-L-glutamate. It participates in amino-acid degradation; L-histidine degradation into L-glutamate; N-formimidoyl-L-glutamate from L-histidine: step 3/3. In terms of biological role, catalyzes the hydrolytic cleavage of the carbon-nitrogen bond in imidazolone-5-propanoate to yield N-formimidoyl-L-glutamate. It is the third step in the universal histidine degradation pathway. This is Imidazolonepropionase from Hahella chejuensis (strain KCTC 2396).